A 165-amino-acid polypeptide reads, in one-letter code: MTKSKSGLSFLWLSAVTFLLDLSSKYFVVKNFELYESINILPVFNLTYVRNYGAAFSFLADHDGWQKYFFIVLAIAISLMLCYFLAKNQATQKLQNIAYALIIGGALGNMIDRLYHGFVVDFFDFYWDIYHYPVFNVADIAISLGAGLMILDAFKNRHEPEQRTE.

The next 3 helical transmembrane spans lie at 9-29 (SFLW…YFVV), 65-85 (WQKY…CYFL), and 100-120 (ALII…GFVV). Residues D121 and D139 contribute to the active site. Residues 134–154 (VFNVADIAISLGAGLMILDAF) form a helical membrane-spanning segment.

Belongs to the peptidase A8 family.

The protein resides in the cell inner membrane. The enzyme catalyses Release of signal peptides from bacterial membrane prolipoproteins. Hydrolyzes -Xaa-Yaa-Zaa-|-(S,diacylglyceryl)Cys-, in which Xaa is hydrophobic (preferably Leu), and Yaa (Ala or Ser) and Zaa (Gly or Ala) have small, neutral side chains.. Its pathway is protein modification; lipoprotein biosynthesis (signal peptide cleavage). This protein specifically catalyzes the removal of signal peptides from prolipoproteins. The protein is Lipoprotein signal peptidase of Pasteurella multocida (strain Pm70).